A 334-amino-acid polypeptide reads, in one-letter code: Malate dehydrogenase, cytoplasmic (334 aa).

Ser-2 carries the N-acetylserine modification. Residues 11 to 17 and Asp-42 each bind NAD(+); that span reads GAAGQIA. 2 residues coordinate substrate: Arg-92 and Arg-98. Position 105 (Asn-105) interacts with NAD(+). An N6-succinyllysine modification is found at Lys-110. Gln-112 is an NAD(+) binding site. Residues Lys-118 and Lys-121 each carry the N6-acetyllysine modification. NAD(+) is bound at residue 129 to 131; it reads VGN. The substrate site is built by Asn-131 and Arg-162. Catalysis depends on His-187, which acts as the Proton acceptor. Lys-214 carries the post-translational modification N6-succinyllysine. Ser-217 is subject to Phosphoserine. Arg-230 bears the Omega-N-methylarginine mark. Ser-241 is modified (phosphoserine). An N6-acetyllysine; alternate modification is found at Lys-298. At Lys-298 the chain carries N6-succinyllysine; alternate. Ser-309 bears the Phosphoserine mark. Lys-318 is modified (N6-succinyllysine). 2 positions are modified to phosphoserine: Ser-332 and Ser-333.

This sequence belongs to the LDH/MDH superfamily. MDH type 2 family. Homodimer. Post-translationally, ISGylated. In terms of processing, acetylation at Lys-118 dramatically enhances enzymatic activity and promotes adipogenic differentiation.

The protein localises to the cytoplasm. Its subcellular location is the cytosol. The enzyme catalyses (S)-malate + NAD(+) = oxaloacetate + NADH + H(+). The catalysed reaction is (2R)-2-hydroxy-3-(4-hydroxyphenyl)propanoate + NAD(+) = 3-(4-hydroxyphenyl)pyruvate + NADH + H(+). It catalyses the reaction (S)-2-hydroxyglutarate + NAD(+) = 2-oxoglutarate + NADH + H(+). Functionally, catalyzes the reduction of aromatic alpha-keto acids in the presence of NADH. Plays essential roles in the malate-aspartate shuttle and the tricarboxylic acid cycle, important in mitochondrial NADH supply for oxidative phosphorylation. Catalyzes the reduction of 2-oxoglutarate to 2-hydroxyglutarate, leading to elevated reactive oxygen species (ROS). The polypeptide is Malate dehydrogenase, cytoplasmic (MDH1) (Felis catus (Cat)).